Reading from the N-terminus, the 258-residue chain is 2-oxo-tetronate isomerase (258 aa).

Glutamate 143 functions as the Proton donor/acceptor in the catalytic mechanism. Residues glutamate 143, aspartate 178, glutamine 204, and glutamate 240 each coordinate Mg(2+). Catalysis depends on glutamate 240, which acts as the Proton donor/acceptor.

Belongs to the hyi family. OtnI subfamily.

It carries out the reaction 2-dehydro-L-erythronate = 3-dehydro-L-erythronate. It catalyses the reaction 2-dehydro-D-erythronate = 3-dehydro-D-erythronate. Its function is as follows. Catalyzes the isomerization of 2-oxo-tetronate to 3-oxo-tetronate. The polypeptide is 2-oxo-tetronate isomerase (Haemophilus influenzae (strain ATCC 51907 / DSM 11121 / KW20 / Rd)).